The primary structure comprises 383 residues: MKLSNALLTLASLALANVSTALPKASPAPSTSSSAASTSFASTSGLQFTIDGETGYFAGTNSYWIGFLTDNADVDLVMGHLKSSGLKILRVWGFNDVTSQPSSGTVWYQLHQDGKSTINTGADGLQRLDYVVSSAEQHDIKLIINFVNYWTDYGGMSAYVSAYGGSGETDFYTSDTMQSAYQTYIKTVVERYSNSSAVFAWELANEPRCPSCDTSVLYNWIEKTSKFIKGLDADRMVCIGDEGFGLNIDSDGSYPYQFSEGLNFTMNLGIDTIDFGTLHLYPDSWGTSDDWGNGWITAHGAACKAAGKPCLLEEYGVTSNHCSVEGSWQKTALSTTGVGADLFWQYGDDLSTGKSPDDGNTIYYGTSDYQCLVTDHVAAIGSA.

Positions 1–21 (MKLSNALLTLASLALANVSTA) are cleaved as a signal peptide. The N-linked (GlcNAc...) asparagine glycan is linked to N17. W92 lines the substrate pocket. The N-linked (GlcNAc...) asparagine glycan is linked to N194. Residue N205 participates in substrate binding. E206 (proton donor) is an active-site residue. The N-linked (GlcNAc...) asparagine glycan is linked to N263. Y281 contacts substrate. E314 acts as the Nucleophile in catalysis. W344 is a substrate binding site.

The protein belongs to the glycosyl hydrolase 5 (cellulase A) family.

It is found in the secreted. The catalysed reaction is Random hydrolysis of (1-&gt;4)-beta-D-mannosidic linkages in mannans, galactomannans and glucomannans.. In terms of biological role, endo-1,4-mannanase, a crucial enzyme for depolymerization of seed galactomannans and wood galactoglucomannans. The protein is Probable mannan endo-1,4-beta-mannosidase A (manA) of Aspergillus niger (strain ATCC MYA-4892 / CBS 513.88 / FGSC A1513).